An 859-amino-acid polypeptide reads, in one-letter code: Outer membrane usher protein AfaC (859 aa).

The first 28 residues, 1–28 (MRDTSSGRMRTGVTGLALAVMVACVMFR), serve as a signal peptide directing secretion.

Belongs to the fimbrial export usher family.

The protein localises to the cell outer membrane. In terms of biological role, involved in the export and assembly of AFA-III afimbrial adhesin subunits across the outer membrane. In Escherichia coli, this protein is Outer membrane usher protein AfaC (afaC).